Consider the following 430-residue polypeptide: Adenylosuccinate synthetase (430 aa).

Residues 12 to 18 (GDEGKGK) and 40 to 42 (GHT) each bind GTP. The active-site Proton acceptor is aspartate 13. Mg(2+) contacts are provided by aspartate 13 and glycine 40. IMP-binding positions include 13 to 16 (DEGK), 38 to 41 (NAGH), threonine 130, arginine 144, glutamine 224, threonine 239, and arginine 303. Residue histidine 41 is the Proton donor of the active site. 299–305 (TNTGRPR) is a binding site for substrate. Residues arginine 305, 331 to 333 (KLD), and 413 to 415 (STS) contribute to the GTP site.

Belongs to the adenylosuccinate synthetase family. Homodimer. Requires Mg(2+) as cofactor.

It localises to the cytoplasm. It carries out the reaction IMP + L-aspartate + GTP = N(6)-(1,2-dicarboxyethyl)-AMP + GDP + phosphate + 2 H(+). Its pathway is purine metabolism; AMP biosynthesis via de novo pathway; AMP from IMP: step 1/2. Plays an important role in the de novo pathway of purine nucleotide biosynthesis. Catalyzes the first committed step in the biosynthesis of AMP from IMP. This chain is Adenylosuccinate synthetase, found in Rhodopseudomonas palustris (strain HaA2).